The chain runs to 201 residues: Ras-related protein Ral-a (201 aa).

18 to 25 (GSGGVGKS) serves as a coordination point for GTP. The Effector region motif lies at 40 to 48 (YEPTKADSY). GTP is bound by residues 65 to 69 (DTAGQ) and 124 to 127 (NKCD). Cys198 carries the post-translational modification Cysteine methyl ester. The S-geranylgeranyl cysteine moiety is linked to residue Cys198. Residues 199-201 (TLL) constitute a propeptide, removed in mature form.

It belongs to the small GTPase superfamily. Ras family.

The protein localises to the cell membrane. Its subcellular location is the cleavage furrow. It is found in the midbody. The protein resides in the midbody ring. It carries out the reaction GTP + H2O = GDP + phosphate + H(+). This Drosophila melanogaster (Fruit fly) protein is Ras-related protein Ral-a (Rala).